We begin with the raw amino-acid sequence, 551 residues long: Putative transport protein NTHI0043 (551 aa).

The next 5 membrane-spanning stretches (helical) occupy residues isoleucine 4–tryptophan 24, glycine 28–asparagine 48, phenylalanine 65–serine 85, alanine 95–alanine 115, and valine 157–isoleucine 177. RCK C-terminal domains are found at residues arginine 191–tyrosine 275 and valine 277–asparagine 360. 6 helical membrane passes run methionine 370–isoleucine 390, alanine 402–phenylalanine 424, isoleucine 438–valine 458, leucine 463–leucine 483, tyrosine 492–alanine 512, and valine 529–tryptophan 549.

This sequence belongs to the AAE transporter (TC 2.A.81) family. YidE subfamily.

The protein localises to the cell membrane. The polypeptide is Putative transport protein NTHI0043 (Haemophilus influenzae (strain 86-028NP)).